The primary structure comprises 390 residues: Probable protein phosphatase 2C 30 (390 aa).

The span at 1-10 shows a compositional bias: polar residues; that stretch reads MQLSKNPIKQ. Disordered regions lie at residues 1–20 and 40–85; these read MQLS…NYTD and PPLV…DSET. Positions 44–61 are enriched in low complexity; the sequence is FSPTSVKTPLSSPRSSPP. Residues 128–385 enclose the PPM-type phosphatase domain; it reads YYSVYCKRGR…DDISLIIIQL (258 aa). Mn(2+) is bound by residues Asp166, Gly167, Asp331, and Asp376.

It belongs to the PP2C family. The cofactor is Mg(2+). It depends on Mn(2+) as a cofactor.

The enzyme catalyses O-phospho-L-seryl-[protein] + H2O = L-seryl-[protein] + phosphate. It carries out the reaction O-phospho-L-threonyl-[protein] + H2O = L-threonyl-[protein] + phosphate. The sequence is that of Probable protein phosphatase 2C 30 (PP2C5) from Arabidopsis thaliana (Mouse-ear cress).